The sequence spans 382 residues: Galactokinase (382 aa).

34–37 contacts substrate; sequence EHTD. 124–130 provides a ligand contact to ATP; the sequence is GAGLSSS. Ser130 and Glu162 together coordinate Mg(2+). Asp174 acts as the Proton acceptor in catalysis. Tyr223 is a substrate binding site.

The protein belongs to the GHMP kinase family. GalK subfamily.

The protein localises to the cytoplasm. The enzyme catalyses alpha-D-galactose + ATP = alpha-D-galactose 1-phosphate + ADP + H(+). The protein operates within carbohydrate metabolism; galactose metabolism. Functionally, catalyzes the transfer of the gamma-phosphate of ATP to D-galactose to form alpha-D-galactose-1-phosphate (Gal-1-P). This chain is Galactokinase, found in Salmonella schwarzengrund (strain CVM19633).